The following is a 316-amino-acid chain: Pantothenate kinase (316 aa).

ATP is bound at residue 95–102 (GSVAVGKS).

It belongs to the prokaryotic pantothenate kinase family.

It is found in the cytoplasm. It catalyses the reaction (R)-pantothenate + ATP = (R)-4'-phosphopantothenate + ADP + H(+). Its pathway is cofactor biosynthesis; coenzyme A biosynthesis; CoA from (R)-pantothenate: step 1/5. This is Pantothenate kinase from Yersinia enterocolitica serotype O:8 / biotype 1B (strain NCTC 13174 / 8081).